Consider the following 222-residue polypeptide: Superoxide dismutase [Mn], mitochondrial (222 aa).

A mitochondrion-targeting transit peptide spans 1-24 (MLCRAACSTGRRLGPVAGAAGSRH). His50 is a binding site for Mn(2+). A 3'-nitrotyrosine modification is found at Tyr58. N6-acetyllysine; alternate is present on residues Lys68 and Lys75. Lys68 and Lys75 each carry N6-succinyllysine; alternate. A Mn(2+)-binding site is contributed by His98. An N6-acetyllysine modification is found at Lys114. An N6-acetyllysine; alternate mark is found at Lys122 and Lys130. 2 positions are modified to N6-succinyllysine; alternate: Lys122 and Lys130. The Mn(2+) site is built by Asp183 and His187. At Lys202 the chain carries N6-acetyllysine.

The protein belongs to the iron/manganese superoxide dismutase family. In terms of assembly, homotetramer. The cofactor is Mn(2+). Post-translationally, nitrated under oxidative stress. Nitration coupled with oxidation inhibits the catalytic activity. In terms of processing, acetylation at Lys-122 decreases enzymatic activity. Deacetylated by SIRT3 upon exposure to ionizing radiations or after long fasting. Polyubiquitinated; leading to proteasomal degradation. Deubiquitinated by USP36 which increases protein stability.

The protein localises to the mitochondrion matrix. The catalysed reaction is 2 superoxide + 2 H(+) = H2O2 + O2. Its function is as follows. Destroys superoxide anion radicals which are normally produced within the cells and which are toxic to biological systems. The protein is Superoxide dismutase [Mn], mitochondrial (Sod2) of Mus musculus (Mouse).